Here is a 222-residue protein sequence, read N- to C-terminus: Protein GrpE (222 aa).

2 disordered regions span residues 1 to 21 and 200 to 222; these read MNDGFAMNTHSKDERAPENGQ and KGGPKAETPAATSEQAAQGPEGA.

The protein belongs to the GrpE family. In terms of assembly, homodimer.

The protein localises to the cytoplasm. Participates actively in the response to hyperosmotic and heat shock by preventing the aggregation of stress-denatured proteins, in association with DnaK and GrpE. It is the nucleotide exchange factor for DnaK and may function as a thermosensor. Unfolded proteins bind initially to DnaJ; upon interaction with the DnaJ-bound protein, DnaK hydrolyzes its bound ATP, resulting in the formation of a stable complex. GrpE releases ADP from DnaK; ATP binding to DnaK triggers the release of the substrate protein, thus completing the reaction cycle. Several rounds of ATP-dependent interactions between DnaJ, DnaK and GrpE are required for fully efficient folding. This Chelativorans sp. (strain BNC1) protein is Protein GrpE.